A 610-amino-acid chain; its full sequence is MNQVRRWQRILILSLLLLSVLAPIVFVSNRLKSITSVDRGEFIEELSDITDKTEDELRLTAIEQDEEGLKEPKRILQDRDFNSVVLSNSSDKSNDTVQSNEGDQKNFLSEVDKGNNHKPKEEQAVSQKTTVSSNAEVKISARDIQLNHKTEFRPPSSKSEKNTRVQLERATDERVKEIRDKIIQAKAYLNLALPGNNSQIVKELRVRTKELERATGDTTKDKYLPKSSPNRLKAMEVALYKVSRAFHNCPAIATKLQAMTYKTEEQARAQKKQAAYLMQLAARTTPKGLHCLSMRLTTEYFTLDHEKRQLLQQSYNDPDLYHYVVFSDNVLASSVVVNSTISSSKEPDKIVFHVVTDSLNYPAISMWFLLNPSGRASIQILNIDEMNVLPLYHAELLMKQNSSDPRIISALNHARFYLPDIFPGLNKIVLFDHDVVVQRDLTRLWSLDMTGKVVGAVETCLEGDPSYRSMDSFINFSDAWVSQKFDPKACTWAFGMNLFDLEEWRRQELTSVYLKYFDLGVKGHLWKAGGLPVGWLTFFGQTFPLEKRWNVGGLGHESGLRASDIEQAAVIHYDGIMKPWLDIGIDKYKRYWNIHVPYHHPHLQRCNIHD.

At 1–6 (MNQVRR) the chain is on the cytoplasmic side. A helical; Signal-anchor for type II membrane protein membrane pass occupies residues 7-27 (WQRILILSLLLLSVLAPIVFV). The Lumenal portion of the chain corresponds to 28–610 (SNRLKSITSV…PHLQRCNIHD (583 aa)). A compositionally biased stretch (polar residues) spans 86 to 101 (LSNSSDKSNDTVQSNE). Residues 86 to 170 (LSNSSDKSND…KNTRVQLERA (85 aa)) are disordered. N-linked (GlcNAc...) asparagine glycosylation is found at Asn88 and Asn94. A compositionally biased stretch (basic and acidic residues) spans 110–123 (EVDKGNNHKPKEEQ). Over residues 124–135 (AVSQKTTVSSNA) the composition is skewed to polar residues. Basic and acidic residues predominate over residues 139 to 170 (ISARDIQLNHKTEFRPPSSKSEKNTRVQLERA). N-linked (GlcNAc...) asparagine glycosylation is found at Asn196, Asn338, Asn401, and Asn475.

This sequence belongs to the glycosyltransferase 8 family. Expressed in roots, inflorescences, siliques, leaves and stems.

The protein localises to the golgi apparatus membrane. Its pathway is glycan metabolism; pectin biosynthesis. Its function is as follows. May be involved in pectin and/or xylans biosynthesis in cell walls. The protein is Probable galacturonosyltransferase 5 (GAUT5) of Arabidopsis thaliana (Mouse-ear cress).